The chain runs to 293 residues: Oxidoreductase R2 (293 aa).

Belongs to the asaB hydroxylase/desaturase family.

The protein operates within secondary metabolite biosynthesis. Functionally, oxidoreductase; part of the gene cluster that mediates the biosynthesis of squalestatin S1 (SQS1, also known as zaragozic acid A), a heavily oxidized fungal polyketide that offers potent cholesterol lowering activity by targeting squalene synthase (SS). SQS1 is composed of a 2,8-dioxobicyclic[3.2.1]octane-3,4,5-tricarboxyclic acid core that is connected to two lipophilic polyketide arms. These initial steps feature the priming of an unusual benzoic acid starter unit onto the highly reducing polyketide synthase pks2, followed by oxaloacetate extension and product release to generate a tricarboxylic acid containing product. The phenylalanine ammonia lyase (PAL) M7 and the acyl-CoA ligase M9 are involved in transforming phenylalanine into benzoyl-CoA. The citrate synthase-like protein R3 is involved in connecting the C-alpha-carbons of the hexaketide chain and oxaloacetate to afford the tricarboxylic acid unit. The potential hydrolytic enzymes, M8 and M10, are in close proximity to pks2 and may participate in product release. On the other side, the tetraketide arm is synthesized by a the squalestatin tetraketide synthase pks1 and enzymatically esterified to the core in the last biosynthetic step, by the acetyltransferase M4. The biosynthesis of the tetraketide must involve 3 rounds of chain extension. After the first and second rounds methyl-transfer occurs, and in all rounds of extension the ketoreductase and dehydratase are active. The enoyl reductase and C-MeT of pks1 are not active in the final round of extension. The acetyltransferase M4 appears to have a broad substrate selectivity for its acyl CoA substrate, allowing the in vitro synthesis of novel squalestatins. The biosynthesis of SQS1 requires several oxidative steps likely performed by oxidoreductases M1, R1 and R2. Finally, in support of the identification of the cluster as being responsible for SQS1 production, the cluster contains a gene encoding a putative squalene synthase (SS) R6, suggesting a likely mechanism for self-resistance. The polypeptide is Oxidoreductase R2 (Phoma sp. (strain ATCC 20986 / MF5453)).